The chain runs to 101 residues: Apolipoprotein C-II (101 aa).

An N-terminal signal peptide occupies residues 1-22; that stretch reads MGIRYLLVLVLVLLVLGCEVQG. The propeptide occupies 23–28; that stretch reads AHMPQQ. The tract at residues 66–74 is lipid binding; it reads TMDEKIREI. The lipoprotein lipase cofactor stretch occupies residues 78-101; that stretch reads STAAVSTYAGIFTDQLLSMLKGDQ.

This sequence belongs to the apolipoprotein C2 family. Proapolipoprotein C-II is synthesized as a sialic acid containing glycoprotein which is subsequently desialylated prior to its proteolytic processing. Post-translationally, proapolipoprotein C-II, the major form found in plasma undergoes proteolytic cleavage of its N-terminal hexapeptide to generate apolipoprotein C-II, which occurs as the minor form in plasma.

The protein localises to the secreted. In terms of biological role, component of chylomicrons, very low-density lipoproteins (VLDL), low-density lipoproteins (LDL), and high-density lipoproteins (HDL) in plasma. Plays an important role in lipoprotein metabolism as an activator of lipoprotein lipase. Both proapolipoprotein C-II and apolipoprotein C-II can activate lipoprotein lipase. This is Apolipoprotein C-II (APOC2) from Neomonachus schauinslandi (Hawaiian monk seal).